The following is a 145-amino-acid chain: Large ribosomal subunit protein uL15 (145 aa).

Residues 20 to 39 (GRVGKHRKHPSGRGNAGGEH) are disordered.

Belongs to the universal ribosomal protein uL15 family.

The chain is Large ribosomal subunit protein uL15 (RPL27A) from Trypanosoma brucei brucei.